The sequence spans 635 residues: DNA-directed RNA polymerase subunit gamma (635 aa).

Zn(2+) contacts are provided by cysteine 74, cysteine 76, cysteine 89, and cysteine 92. The Mg(2+) site is built by aspartate 471, aspartate 473, and aspartate 475.

The protein belongs to the RNA polymerase beta' chain family. RpoC1 subfamily. In terms of assembly, in cyanobacteria the RNAP catalytic core is composed of 2 alpha, 1 beta, 1 beta', 1 gamma and 1 omega subunit. When a sigma factor is associated with the core the holoenzyme is formed, which can initiate transcription. The cofactor is Mg(2+). Zn(2+) is required as a cofactor.

The catalysed reaction is RNA(n) + a ribonucleoside 5'-triphosphate = RNA(n+1) + diphosphate. Functionally, DNA-dependent RNA polymerase catalyzes the transcription of DNA into RNA using the four ribonucleoside triphosphates as substrates. This Prochlorococcus marinus (strain NATL1A) protein is DNA-directed RNA polymerase subunit gamma.